Consider the following 970-residue polypeptide: Sodium/calcium exchanger 1 (970 aa).

The signal sequence occupies residues 1-32 (MLQFSLSPTLSMGFHVIAMVALLFSHVDHISA). Residues 33–71 (ETEMEGEGNETGECTGSYYCKKGVILPIWEPQDPSFGDK) lie on the Extracellular side of the membrane. An N-linked (GlcNAc...) asparagine glycan is attached at N41. A helical membrane pass occupies residues 72-92 (IARATVYFVAMVYMFLGVSII). Over 93–133 (ADRFMSSIEVITSQEKEITIKKPNGETTKTTVRIWNETVSN) the chain is Cytoplasmic. A helical membrane pass occupies residues 134-154 (LTLMALGSSAPEILLSVIEVC). An Alpha-1 repeat occupies 138–178 (ALGSSAPEILLSVIEVCGHNFTAGDLGPSTIVGSAAFNMFI). Over 155-167 (GHNFTAGDLGPST) the chain is Extracellular. N157 carries an N-linked (GlcNAc...) asparagine glycan. The helical transmembrane segment at 168 to 188 (IVGSAAFNMFIIIALCVYVVP) threads the bilayer. Over 189 to 201 (DGETRKIKHLRVF) the chain is Cytoplasmic. Residues 202–222 (FVTAAWSIFAYTWLYIILSVS) traverse the membrane as a helical segment. At 223–228 (SPGVVE) the chain is on the extracellular side. The helical transmembrane segment at 229-249 (VWEGLLTFFFFPICVVFAWVA) threads the bilayer. The Cytoplasmic segment spans residues 250-797 (DRRLLFYKYV…FVPPTEYWNG (548 aa)). The segment at 251–270 (RRLLFYKYVYKRYRAGKQRG) is putative calmodulin-binding region. Residues S282 and S389 each carry the phosphoserine modification. 2 consecutive Calx-beta domains span residues 393-493 (VNTE…VHLS) and 524-624 (ATVT…LEIG). Positions 417, 453, 478, 479, 481, 483, 486, 530, 531, 532, 548, 584, 610, 611, 612, and 715 each coordinate Ca(2+). Residues 798 to 818 (WACFIVSILMIGLLTAFIGDL) form a helical membrane-spanning segment. Over 819 to 821 (ASH) the chain is Extracellular. A helical transmembrane segment spans residues 822–842 (FACTIALKDSVTAVVFVALGT). One copy of the Alpha-2 repeat lies at 839–875 (ALGTSVPDTFASKVAATQDQYADASIGNVTGSNAVNV). Topologically, residues 843-871 (SVPDTFASKVAATQDQYADASIGNVTGSN) are cytoplasmic. Residues 872 to 892 (AVNVFLGIGVAWSIAAIYHAA) form a helical membrane-spanning segment. At 893–903 (NGEQFKVSPGT) the chain is on the extracellular side. A helical transmembrane segment spans residues 904–924 (LAFSVTLFTIFAFINVGVLLY). Residues 925-941 (RRRPEIGGELGGPRTAK) are Cytoplasmic-facing. A helical membrane pass occupies residues 942–962 (LLTSCLFVLLWLLYIFFSSLE). Residues 963–970 (AYCHIKGF) are Extracellular-facing.

The protein belongs to the Ca(2+):cation antiporter (CaCA) (TC 2.A.19) family. SLC8 subfamily.

The protein resides in the cell membrane. It carries out the reaction Ca(2+)(in) + 3 Na(+)(out) = Ca(2+)(out) + 3 Na(+)(in). Activated by micromolar levels of Ca(2+). Its function is as follows. Mediates the exchange of one Ca(2+) ion against three to four Na(+) ions across the cell membrane, and thereby contributes to the regulation of cytoplasmic Ca(2+) levels and Ca(2+)-dependent cellular processes. Contributes to Ca(2+) transport during excitation-contraction coupling in muscle. In a first phase, voltage-gated channels mediate the rapid increase of cytoplasmic Ca(2+) levels due to release of Ca(2+) stores from the endoplasmic reticulum. SLC8A1 mediates the export of Ca(2+) from the cell during the next phase, so that cytoplasmic Ca(2+) levels rapidly return to baseline. Required for normal embryonic heart development and the onset of heart contractions. The protein is Sodium/calcium exchanger 1 (SLC8A1) of Bos taurus (Bovine).